A 459-amino-acid polypeptide reads, in one-letter code: Bifunctional protein GlmU (459 aa).

A pyrophosphorylase region spans residues 1-229 (MSNFAIILAA…FDESLGVNDR (229 aa)). UDP-N-acetyl-alpha-D-glucosamine contacts are provided by residues 8–11 (LAAG), Lys-22, Gln-72, and 77–78 (GT). Mg(2+) is bound at residue Asp-102. The UDP-N-acetyl-alpha-D-glucosamine site is built by Gly-139, Glu-154, Asn-169, and Asn-227. Asn-227 contributes to the Mg(2+) binding site. The tract at residues 230–250 (VALATAESVMRRRINHKHMVN) is linker. The tract at residues 251–459 (GVSFVNPEAT…TRLPHHPKNQ (209 aa)) is N-acetyltransferase. UDP-N-acetyl-alpha-D-glucosamine-binding residues include Arg-332 and Lys-350. The active-site Proton acceptor is His-362. Positions 365 and 376 each coordinate UDP-N-acetyl-alpha-D-glucosamine. Residues Ala-379, 385-386 (NY), Ser-404, Ala-422, and Arg-439 each bind acetyl-CoA.

The protein in the N-terminal section; belongs to the N-acetylglucosamine-1-phosphate uridyltransferase family. This sequence in the C-terminal section; belongs to the transferase hexapeptide repeat family. As to quaternary structure, homotrimer. Requires Mg(2+) as cofactor.

The protein resides in the cytoplasm. It carries out the reaction alpha-D-glucosamine 1-phosphate + acetyl-CoA = N-acetyl-alpha-D-glucosamine 1-phosphate + CoA + H(+). It catalyses the reaction N-acetyl-alpha-D-glucosamine 1-phosphate + UTP + H(+) = UDP-N-acetyl-alpha-D-glucosamine + diphosphate. Its pathway is nucleotide-sugar biosynthesis; UDP-N-acetyl-alpha-D-glucosamine biosynthesis; N-acetyl-alpha-D-glucosamine 1-phosphate from alpha-D-glucosamine 6-phosphate (route II): step 2/2. It participates in nucleotide-sugar biosynthesis; UDP-N-acetyl-alpha-D-glucosamine biosynthesis; UDP-N-acetyl-alpha-D-glucosamine from N-acetyl-alpha-D-glucosamine 1-phosphate: step 1/1. It functions in the pathway bacterial outer membrane biogenesis; LPS lipid A biosynthesis. Catalyzes the last two sequential reactions in the de novo biosynthetic pathway for UDP-N-acetylglucosamine (UDP-GlcNAc). The C-terminal domain catalyzes the transfer of acetyl group from acetyl coenzyme A to glucosamine-1-phosphate (GlcN-1-P) to produce N-acetylglucosamine-1-phosphate (GlcNAc-1-P), which is converted into UDP-GlcNAc by the transfer of uridine 5-monophosphate (from uridine 5-triphosphate), a reaction catalyzed by the N-terminal domain. The sequence is that of Bifunctional protein GlmU from Streptococcus pneumoniae (strain Hungary19A-6).